We begin with the raw amino-acid sequence, 103 residues long: Small ribosomal subunit protein uS10 (103 aa).

It belongs to the universal ribosomal protein uS10 family. In terms of assembly, part of the 30S ribosomal subunit.

Involved in the binding of tRNA to the ribosomes. This chain is Small ribosomal subunit protein uS10, found in Wigglesworthia glossinidia brevipalpis.